The chain runs to 390 residues: GTPase Obg (390 aa).

The Obg domain occupies 1–159 (MKFVDEATIL…RDLQLELMLL (159 aa)). A disordered region spans residues 127–146 (NTRFKSSVNRTPRQKTMGTP). Over residues 129-143 (RFKSSVNRTPRQKTM) the composition is skewed to polar residues. Residues 160-333 (ADVGMLGMPN…LCWDVMHFII (174 aa)) enclose the OBG-type G domain. Residues 166–173 (GMPNAGKS), 191–195 (FTTLV), 213–216 (DIPG), 283–286 (NKID), and 314–316 (SAA) each bind GTP. Mg(2+) is bound by residues serine 173 and threonine 193. The segment covering 364–384 (MEAEAEEEWDDDWDEDDDEGV) has biased composition (acidic residues). The disordered stretch occupies residues 364 to 390 (MEAEAEEEWDDDWDEDDDEGVEIVYQR).

The protein belongs to the TRAFAC class OBG-HflX-like GTPase superfamily. OBG GTPase family. In terms of assembly, monomer. It depends on Mg(2+) as a cofactor.

The protein resides in the cytoplasm. An essential GTPase which binds GTP, GDP and possibly (p)ppGpp with moderate affinity, with high nucleotide exchange rates and a fairly low GTP hydrolysis rate. Plays a role in control of the cell cycle, stress response, ribosome biogenesis and in those bacteria that undergo differentiation, in morphogenesis control. The chain is GTPase Obg from Cronobacter sakazakii (strain ATCC BAA-894) (Enterobacter sakazakii).